The primary structure comprises 743 residues: TSL-kinase interacting protein 1 (743 aa).

The 52-residue stretch at 53–104 (RQWAAWTHQEEESFFTALRQVGKNFEKITSRVQSKNKDQVRHYYYRLVRRMN) folds into the SANT domain. 2 disordered regions span residues 486–523 (SGVH…PGEW) and 626–679 (SPKG…TPCG). Basic and acidic residues predominate over residues 488-499 (VHDRPARSRDDY).

As to quaternary structure, interacts only with active kinase forms of TOUSLED. Interacts with SNL1. In terms of processing, phosphorylated in vitro by TOUSLED. In terms of tissue distribution, expressed in flowers, roots and leaves.

Its subcellular location is the nucleus. The chain is TSL-kinase interacting protein 1 (TKI1) from Arabidopsis thaliana (Mouse-ear cress).